We begin with the raw amino-acid sequence, 488 residues long: Ribulose bisphosphate carboxylase large chain 1 (488 aa).

The substrate site is built by Asn128 and Thr178. Lys180 acts as the Proton acceptor in catalysis. Lys182 lines the substrate pocket. 3 residues coordinate Mg(2+): Lys206, Asp208, and Glu209. The residue at position 206 (Lys206) is an N6-carboxylysine. The active-site Proton acceptor is His298. Substrate-binding residues include Arg299, His331, and Ser383.

This sequence belongs to the RuBisCO large chain family. Type I subfamily. As to quaternary structure, heterohexadecamer of 8 large chains and 8 small chains. The cofactor is Mg(2+).

The enzyme catalyses 2 (2R)-3-phosphoglycerate + 2 H(+) = D-ribulose 1,5-bisphosphate + CO2 + H2O. It carries out the reaction D-ribulose 1,5-bisphosphate + O2 = 2-phosphoglycolate + (2R)-3-phosphoglycerate + 2 H(+). In terms of biological role, ruBisCO catalyzes two reactions: the carboxylation of D-ribulose 1,5-bisphosphate, the primary event in carbon dioxide fixation, as well as the oxidative fragmentation of the pentose substrate. Both reactions occur simultaneously and in competition at the same active site. This chain is Ribulose bisphosphate carboxylase large chain 1, found in Nitrobacter hamburgensis (strain DSM 10229 / NCIMB 13809 / X14).